The chain runs to 38 residues: Antimicrobial peptide 1 (38 aa).

Post-translationally, disulfide bonds. In terms of tissue distribution, expressed in flowers but not in leaves, seeds or roots (at protein level).

Antimicrobial peptide. Active against fungal species B.cinerea (IC(50)=5.8 uM) and A.niger (IC(50)=5.6 uM) but not against F.oxysporum, F.graminearum, B.sorokinina and P.debaryanum at concentrations below 10 uM. Active against bacterial species P.syringae, B.subtilis and X.campestris. The sequence is that of Antimicrobial peptide 1 from Taraxacum officinale (Common dandelion).